The sequence spans 420 residues: Serine/threonine transporter SstT (420 aa).

9 helical membrane passes run 14 to 34 (IMIG…WTFI), 40 to 60 (LFVG…IIAS), 71 to 91 (YVGS…VVAV), 172 to 192 (ITTV…GLVF), 210 to 230 (LLLL…AIVF), 283 to 303 (IPLG…IMTL), 309 to 329 (LGMS…AVSA), 332 to 352 (ASGI…LFGI), and 356 to 376 (IAMQ…SIET).

This sequence belongs to the dicarboxylate/amino acid:cation symporter (DAACS) (TC 2.A.23) family.

It localises to the cell membrane. It carries out the reaction L-serine(in) + Na(+)(in) = L-serine(out) + Na(+)(out). The catalysed reaction is L-threonine(in) + Na(+)(in) = L-threonine(out) + Na(+)(out). Its function is as follows. Involved in the import of serine and threonine into the cell, with the concomitant import of sodium (symport system). The protein is Serine/threonine transporter SstT of Enterococcus faecalis (strain ATCC 700802 / V583).